An 856-amino-acid chain; its full sequence is Leucine--tRNA ligase (856 aa).

Residues 53–63 (PYPSGNLHMGH) carry the 'HIGH' region motif. The 'KMSKS' region signature appears at 622 to 626 (KMSKS). Lysine 625 serves as a coordination point for ATP.

Belongs to the class-I aminoacyl-tRNA synthetase family.

It localises to the cytoplasm. The enzyme catalyses tRNA(Leu) + L-leucine + ATP = L-leucyl-tRNA(Leu) + AMP + diphosphate. The sequence is that of Leucine--tRNA ligase from Prochlorococcus marinus (strain MIT 9215).